A 226-amino-acid chain; its full sequence is Fibrillarin-like rRNA/tRNA 2'-O-methyltransferase (226 aa).

S-adenosyl-L-methionine contacts are provided by residues 85 to 86 (TT), 104 to 105 (EF), 129 to 130 (DA), and 149 to 152 (DVAQ).

This sequence belongs to the methyltransferase superfamily. Fibrillarin family. Interacts with nop5. Component of box C/D small ribonucleoprotein (sRNP) particles that contain rpl7ae, FlpA and nop5, plus a guide RNA.

In terms of biological role, involved in pre-rRNA and tRNA processing. Utilizes the methyl donor S-adenosyl-L-methionine to catalyze the site-specific 2'-hydroxyl methylation of ribose moieties in rRNA and tRNA. Site specificity is provided by a guide RNA that base pairs with the substrate. Methylation occurs at a characteristic distance from the sequence involved in base pairing with the guide RNA. This is Fibrillarin-like rRNA/tRNA 2'-O-methyltransferase from Thermococcus sibiricus (strain DSM 12597 / MM 739).